A 476-amino-acid chain; its full sequence is Ataxin-10 (476 aa).

An Omega-N-methylarginine modification is found at R10. Phosphoserine occurs at positions 13 and 78. Phosphothreonine is present on T83. Position 431 is a phosphoserine (S431).

The protein belongs to the ataxin-10 family. Homooligomer. Interacts with GNB2. Interacts with IQCB1. Interacts with OGT. In terms of processing, polyubiquitinated. Post-translationally, phosphorylation at Ser-13 by AURKB promotes the association of ATXN10 with PLK1. Phosphorylation at Ser-78 and Thr-83 by PLK1 may play a role in the regulation of cytokinesis and may stimulate the proteasome-mediated degradation of ATXN10.

Its subcellular location is the cytoplasm. It is found in the perinuclear region. The protein resides in the midbody. The protein localises to the cytoskeleton. It localises to the cilium basal body. Its subcellular location is the microtubule organizing center. It is found in the centrosome. The protein resides in the centriole. Functionally, may play a role in the regulation of cytokinesis. May play a role in signaling by stimulating protein glycosylation. Induces neuritogenesis by activating the Ras-MAP kinase pathway and is necessary for the survival of cerebellar neurons. Does not appear to play a major role in ciliogenesis. The chain is Ataxin-10 (ATXN10) from Pongo abelii (Sumatran orangutan).